Reading from the N-terminus, the 134-residue chain is Biopolymer transport protein exbD2 (134 aa).

The Cytoplasmic segment spans residues 1 to 17 (MRLGRRTSKQEEAQIDL). A helical transmembrane segment spans residues 18–38 (TSMLDIVFIMLIFFIVTSSFV). Over 39–134 (RESGVEVNRP…KSIALAAEKP (96 aa)) the chain is Periplasmic.

Belongs to the ExbD/TolR family. In terms of assembly, the accessory proteins ExbB and ExbD seem to form a complex with TonB.

Its subcellular location is the cell inner membrane. Functionally, involved in the TonB-dependent energy-dependent transport of various receptor-bound substrates. The polypeptide is Biopolymer transport protein exbD2 (exbD2) (Vibrio cholerae serotype O1 (strain ATCC 39315 / El Tor Inaba N16961)).